Consider the following 356-residue polypeptide: Holliday junction branch migration complex subunit RuvB (356 aa).

Positions 4–191 (TDKLATEQRI…FGIVARLEFY (188 aa)) are large ATPase domain (RuvB-L). Residues leucine 30, arginine 31, glycine 72, lysine 75, threonine 76, threonine 77, 138–140 (EDY), arginine 181, tyrosine 191, and arginine 228 contribute to the ATP site. Position 76 (threonine 76) interacts with Mg(2+). The small ATPAse domain (RuvB-S) stretch occupies residues 192–262 (DAEQLSRIVR…VADAALAMLD (71 aa)). Residues 265-356 (PVGFDLMDRK…RDEWDTPDGK (92 aa)) form a head domain (RuvB-H) region. Residues arginine 301, arginine 320, and arginine 325 each coordinate DNA.

Belongs to the RuvB family. In terms of assembly, homohexamer. Forms an RuvA(8)-RuvB(12)-Holliday junction (HJ) complex. HJ DNA is sandwiched between 2 RuvA tetramers; dsDNA enters through RuvA and exits via RuvB. An RuvB hexamer assembles on each DNA strand where it exits the tetramer. Each RuvB hexamer is contacted by two RuvA subunits (via domain III) on 2 adjacent RuvB subunits; this complex drives branch migration. In the full resolvosome a probable DNA-RuvA(4)-RuvB(12)-RuvC(2) complex forms which resolves the HJ.

Its subcellular location is the cytoplasm. It carries out the reaction ATP + H2O = ADP + phosphate + H(+). Functionally, the RuvA-RuvB-RuvC complex processes Holliday junction (HJ) DNA during genetic recombination and DNA repair, while the RuvA-RuvB complex plays an important role in the rescue of blocked DNA replication forks via replication fork reversal (RFR). RuvA specifically binds to HJ cruciform DNA, conferring on it an open structure. The RuvB hexamer acts as an ATP-dependent pump, pulling dsDNA into and through the RuvAB complex. RuvB forms 2 homohexamers on either side of HJ DNA bound by 1 or 2 RuvA tetramers; 4 subunits per hexamer contact DNA at a time. Coordinated motions by a converter formed by DNA-disengaged RuvB subunits stimulates ATP hydrolysis and nucleotide exchange. Immobilization of the converter enables RuvB to convert the ATP-contained energy into a lever motion, pulling 2 nucleotides of DNA out of the RuvA tetramer per ATP hydrolyzed, thus driving DNA branch migration. The RuvB motors rotate together with the DNA substrate, which together with the progressing nucleotide cycle form the mechanistic basis for DNA recombination by continuous HJ branch migration. Branch migration allows RuvC to scan DNA until it finds its consensus sequence, where it cleaves and resolves cruciform DNA. This chain is Holliday junction branch migration complex subunit RuvB, found in Burkholderia cenocepacia (strain HI2424).